The sequence spans 125 residues: MAKKNKKVVTQGIAHIHSTYQNTIVSFSDLKGNVFAWSSSGAIGYKGTKKKTPYAAGLAAAAAVEKAKEFGLKEVSILVKGVGPGKSTARKQIETSGFTIKDVKDVTPTPHNGTRPPKKILKREK.

Residues 101-125 are disordered; that stretch reads KDVKDVTPTPHNGTRPPKKILKREK. Residues 116–125 are compositionally biased toward basic residues; it reads PPKKILKREK.

This sequence belongs to the universal ribosomal protein uS11 family. As to quaternary structure, part of the 30S ribosomal subunit. Interacts with proteins S7 and S18. Binds to IF-3.

Its function is as follows. Located on the platform of the 30S subunit, it bridges several disparate RNA helices of the 16S rRNA. Forms part of the Shine-Dalgarno cleft in the 70S ribosome. In Mycoplasma sp, this protein is Small ribosomal subunit protein uS11.